We begin with the raw amino-acid sequence, 372 residues long: MEKRDYYEVLGLTKSATKDEIKKAYRKLSKQYHPDLNKEPGADEKFKEIAEAYEVLSDDQKKARYDQFGHEDPNAGFGGGFGGGGFGGFEDIFSSFFGGGGRRQDPNAPRKGDDLQYRMNIKFEEAIFGKETEIEIPKDETCETCHGSGAKPGTQPETCSTCNGAGQINQAVDTPFGRMMNRRSCTTCHGTGKIIKEKCSTCRGEGKVQKRKKIKVSIPAGVDDGQQIRVSGQGEPGINGGPAGDLYIMFRVQGHNDFERDGDDIYFELKLTFPQAALGDEIEVPTVHGKVKLRIPAGTQSGAQFRLKDKGVKNVHGYGMGNQYVTVKVMTPEKLTEKQKQLLREFAEISGDIPEEQGSSLFDKIKKKFQGE.

Residues 5-69 (DYYEVLGLTK…QKKARYDQFG (65 aa)) form the J domain. The segment at 129–211 (GKETEIEIPK…CRGEGKVQKR (83 aa)) adopts a CR-type zinc-finger fold. Zn(2+) is bound by residues Cys142, Cys145, Cys159, Cys162, Cys185, Cys188, Cys199, and Cys202. CXXCXGXG motif repeat units follow at residues 142–149 (CETCHGSG), 159–166 (CSTCNGAG), 185–192 (CTTCHGTG), and 199–206 (CSTCRGEG).

Belongs to the DnaJ family. As to quaternary structure, homodimer. Zn(2+) is required as a cofactor.

It is found in the cytoplasm. In terms of biological role, participates actively in the response to hyperosmotic and heat shock by preventing the aggregation of stress-denatured proteins and by disaggregating proteins, also in an autonomous, DnaK-independent fashion. Unfolded proteins bind initially to DnaJ; upon interaction with the DnaJ-bound protein, DnaK hydrolyzes its bound ATP, resulting in the formation of a stable complex. GrpE releases ADP from DnaK; ATP binding to DnaK triggers the release of the substrate protein, thus completing the reaction cycle. Several rounds of ATP-dependent interactions between DnaJ, DnaK and GrpE are required for fully efficient folding. Also involved, together with DnaK and GrpE, in the DNA replication of plasmids through activation of initiation proteins. In Lysinibacillus sphaericus (strain C3-41), this protein is Chaperone protein DnaJ.